A 294-amino-acid chain; its full sequence is Protoheme IX farnesyltransferase (294 aa).

Transmembrane regions (helical) follow at residues 22-42 (VTQL…PELP), 46-66 (IVVA…AINC), 89-109 (ITVP…MWVL), 116-136 (LTMW…TIIL), 143-163 (NIVI…AAVA), 170-190 (AWIL…ALAL), 212-232 (FTQF…MLPF), 234-254 (VGMS…IFVW), and 272-292 (FAYS…DHYL).

Belongs to the UbiA prenyltransferase family. Protoheme IX farnesyltransferase subfamily.

The protein resides in the cell inner membrane. It carries out the reaction heme b + (2E,6E)-farnesyl diphosphate + H2O = Fe(II)-heme o + diphosphate. Its pathway is porphyrin-containing compound metabolism; heme O biosynthesis; heme O from protoheme: step 1/1. In terms of biological role, converts heme B (protoheme IX) to heme O by substitution of the vinyl group on carbon 2 of heme B porphyrin ring with a hydroxyethyl farnesyl side group. In Janthinobacterium sp. (strain Marseille) (Minibacterium massiliensis), this protein is Protoheme IX farnesyltransferase.